A 141-amino-acid chain; its full sequence is Large ribosomal subunit protein uL11 (141 aa).

Belongs to the universal ribosomal protein uL11 family. As to quaternary structure, part of the ribosomal stalk of the 50S ribosomal subunit. Interacts with L10 and the large rRNA to form the base of the stalk. L10 forms an elongated spine to which L12 dimers bind in a sequential fashion forming a multimeric L10(L12)X complex. In terms of processing, one or more lysine residues are methylated.

In terms of biological role, forms part of the ribosomal stalk which helps the ribosome interact with GTP-bound translation factors. This is Large ribosomal subunit protein uL11 from Pelodictyon phaeoclathratiforme (strain DSM 5477 / BU-1).